The following is a 943-amino-acid chain: Translation initiation factor IF-2 (943 aa).

The disordered stretch occupies residues S30 to E357. Composition is skewed to basic and acidic residues over residues P69–S82, F112–N137, Q145–N155, D163–A196, and R224–Q253. Residues V254–K266 show a composition bias toward low complexity. The span at K296 to K309 shows a compositional bias: basic and acidic residues. Positions N313–K332 are enriched in low complexity. One can recognise a tr-type G domain in the interval E445 to K614. Residues G454–T461 form a G1 region. G454–T461 provides a ligand contact to GTP. The interval G479–H483 is G2. The interval D500 to G503 is G3. GTP-binding positions include D500 to H504 and N554 to D557. The interval N554–D557 is G4. Positions S590–K592 are G5.

Belongs to the TRAFAC class translation factor GTPase superfamily. Classic translation factor GTPase family. IF-2 subfamily.

The protein localises to the cytoplasm. Its function is as follows. One of the essential components for the initiation of protein synthesis. Protects formylmethionyl-tRNA from spontaneous hydrolysis and promotes its binding to the 30S ribosomal subunits. Also involved in the hydrolysis of GTP during the formation of the 70S ribosomal complex. This chain is Translation initiation factor IF-2, found in Streptococcus thermophilus (strain ATCC BAA-250 / LMG 18311).